The chain runs to 663 residues: DNA ligase (663 aa).

Residues 33-37 (DQEFD), 82-83 (SL), and glutamate 113 each bind NAD(+). Lysine 115 acts as the N6-AMP-lysine intermediate in catalysis. NAD(+)-binding residues include arginine 136, glutamate 170, lysine 286, and lysine 310. Residues cysteine 404, cysteine 407, cysteine 422, and cysteine 427 each contribute to the Zn(2+) site. The BRCT domain maps to 587 to 663 (SSDPSLTGKL…IEESDLEDFL (77 aa)).

This sequence belongs to the NAD-dependent DNA ligase family. LigA subfamily. It depends on Mg(2+) as a cofactor. The cofactor is Mn(2+).

The catalysed reaction is NAD(+) + (deoxyribonucleotide)n-3'-hydroxyl + 5'-phospho-(deoxyribonucleotide)m = (deoxyribonucleotide)n+m + AMP + beta-nicotinamide D-nucleotide.. In terms of biological role, DNA ligase that catalyzes the formation of phosphodiester linkages between 5'-phosphoryl and 3'-hydroxyl groups in double-stranded DNA using NAD as a coenzyme and as the energy source for the reaction. It is essential for DNA replication and repair of damaged DNA. This Natranaerobius thermophilus (strain ATCC BAA-1301 / DSM 18059 / JW/NM-WN-LF) protein is DNA ligase.